A 261-amino-acid chain; its full sequence is MTDSPAPRASVQLIQTGGAAMPLVLIHDACGTIYTYHALSKLGRTVYGIGNPRFEKCTSWTGGIGEMAACYHAAIKQRIRRGKILVGGWSLGGVIALEIARLFADDAAIHVHGVVLIDSPFPSKATVTGEDLQLPPLPPGLPANRRQSVAFAMREAVDLLGDWDPKASWQRADKKPPPAALIRALDYLPGSSADAQRDEFLVDRMRTQKLLGWENSGLDFIRATYEAPGHHWGIFSSENVACLSDTLSKACAELEVVDGGR.

This sequence belongs to the AMT4 thioesterase family.

The protein operates within antifungal biosynthesis. Thioesterase; part of the gene cluster that mediates the biosynthesis of the antifungal antibiotic FR901469, an inhibitor of beta-1,3-glucansynthase, exerting antifungal activity against the pathogenes Candida albicans and Aspergillus fumigatus. FR901469 is a cyclic depsipeptide containing 12 amino acid residues and a fatty acid chain. The NRPS frbI contains 12 modules responsible for the formation of the depsipeptide backbone which is denoted as Acyl-Thr-Ala-Tyr-Val-4OHPro-Thr-Thr-3OHPro-threo3OHGln-Gly-Thr-Orn-OH (C71H116N14O23). The PKS frbB is probably involved in the production of the hydrocarbon chain, and the acyl-CoA ligase frbC might be involved in the transport of the chain to the peptide ptoduct of frbI. Because FR901469 contains 3 hydroxylated amino acid residues, the 3 oxygenases frbA, frbH, and frbJ might be participating in amino acid hydroxylation. As no thioesterase domains were detected in frbI or frbB, the thioesterases frbD and frbE may instead release and cyclize the products of the NRPS and PKS, respectively. The sequence is that of Thioesterase frbD from Dothideomycetidae sp. (strain 11243) (Fungal sp. (strain No.11243)).